Reading from the N-terminus, the 209-residue chain is Uracil phosphoribosyltransferase (209 aa).

5-phospho-alpha-D-ribose 1-diphosphate-binding positions include Arg79, Arg104, and 131-139 (DPMLATGGS). Uracil contacts are provided by residues Ile194 and 199-201 (GDA). Residue Asp200 participates in 5-phospho-alpha-D-ribose 1-diphosphate binding.

This sequence belongs to the UPRTase family. The cofactor is Mg(2+).

It carries out the reaction UMP + diphosphate = 5-phospho-alpha-D-ribose 1-diphosphate + uracil. Its pathway is pyrimidine metabolism; UMP biosynthesis via salvage pathway; UMP from uracil: step 1/1. With respect to regulation, allosterically activated by GTP. In terms of biological role, catalyzes the conversion of uracil and 5-phospho-alpha-D-ribose 1-diphosphate (PRPP) to UMP and diphosphate. This chain is Uracil phosphoribosyltransferase, found in Listeria innocua serovar 6a (strain ATCC BAA-680 / CLIP 11262).